The following is a 295-amino-acid chain: UTP--glucose-1-phosphate uridylyltransferase (295 aa).

It belongs to the UDPGP type 2 family.

It carries out the reaction alpha-D-glucose 1-phosphate + UTP + H(+) = UDP-alpha-D-glucose + diphosphate. Functionally, may play a role in stationary phase survival. This chain is UTP--glucose-1-phosphate uridylyltransferase (galU), found in Haemophilus ducreyi (strain 35000HP / ATCC 700724).